Consider the following 291-residue polypeptide: Small ribosomal subunit protein uS2 (291 aa).

Residues 241-270 (KREPRQINRPVMSSENQAEQQTSVANENVQ) form a disordered region. Over residues 251 to 270 (VMSSENQAEQQTSVANENVQ) the composition is skewed to polar residues.

It belongs to the universal ribosomal protein uS2 family.

The sequence is that of Small ribosomal subunit protein uS2 from Mycoplasma capricolum subsp. capricolum (strain California kid / ATCC 27343 / NCTC 10154).